The following is a 445-amino-acid chain: Succinate--CoA ligase [ADP-forming] subunit beta, mitochondrial (445 aa).

The transit peptide at 1–17 directs the protein to the mitochondrion; sequence MLSNIVKKTIQSSKNLK. The ATP-grasp domain maps to 43-270; the sequence is QKMMKSYGIN…DNAAFRHPDI (228 aa). ATP contacts are provided by residues K80 and 87 to 89; that span reads GRG. Residues N240 and D254 each contribute to the Mg(2+) site. Residues N305 and 362-364 contribute to the substrate site; that span reads GIM.

It belongs to the succinate/malate CoA ligase beta subunit family. ATP-specific subunit beta subfamily. Heterodimer of an alpha and a beta subunit. The beta subunit determines specificity for ATP. It depends on Mg(2+) as a cofactor.

The protein resides in the mitochondrion. It carries out the reaction succinate + ATP + CoA = succinyl-CoA + ADP + phosphate. Its pathway is carbohydrate metabolism; tricarboxylic acid cycle; succinate from succinyl-CoA (ligase route): step 1/1. ATP-specific succinyl-CoA synthetase functions in the citric acid cycle (TCA), coupling the hydrolysis of succinyl-CoA to the synthesis of ATP and thus represents the only step of substrate-level phosphorylation in the TCA. The beta subunit provides nucleotide specificity of the enzyme and binds the substrate succinate, while the binding sites for coenzyme A and phosphate are found in the alpha subunit. In Dictyostelium discoideum (Social amoeba), this protein is Succinate--CoA ligase [ADP-forming] subunit beta, mitochondrial (scsC).